The sequence spans 100 residues: Small ribosomal subunit protein uS14c (100 aa).

The protein belongs to the universal ribosomal protein uS14 family. Component of the chloroplast small ribosomal subunit (SSU). Mature 70S chloroplast ribosomes of higher plants consist of a small (30S) and a large (50S) subunit. The 30S small subunit contains 1 molecule of ribosomal RNA (16S rRNA) and 24 different proteins. The 50S large subunit contains 3 rRNA molecules (23S, 5S and 4.5S rRNA) and 33 different proteins.

It is found in the plastid. Its subcellular location is the chloroplast. Component of the chloroplast ribosome (chloro-ribosome), a dedicated translation machinery responsible for the synthesis of chloroplast genome-encoded proteins, including proteins of the transcription and translation machinery and components of the photosynthetic apparatus. The chain is Small ribosomal subunit protein uS14c from Spinacia oleracea (Spinach).